A 341-amino-acid polypeptide reads, in one-letter code: Glycerol-3-phosphate dehydrogenase [NAD(P)+] (341 aa).

Serine 14, phenylalanine 15, arginine 35, and lysine 108 together coordinate NADPH. Lysine 108 and glycine 136 together coordinate sn-glycerol 3-phosphate. Alanine 140 is a binding site for NADPH. 5 residues coordinate sn-glycerol 3-phosphate: lysine 191, aspartate 244, serine 254, arginine 255, and asparagine 256. Catalysis depends on lysine 191, which acts as the Proton acceptor. NADPH is bound at residue arginine 255. Positions 279 and 281 each coordinate NADPH.

Belongs to the NAD-dependent glycerol-3-phosphate dehydrogenase family.

Its subcellular location is the cytoplasm. It carries out the reaction sn-glycerol 3-phosphate + NAD(+) = dihydroxyacetone phosphate + NADH + H(+). It catalyses the reaction sn-glycerol 3-phosphate + NADP(+) = dihydroxyacetone phosphate + NADPH + H(+). The protein operates within membrane lipid metabolism; glycerophospholipid metabolism. Catalyzes the reduction of the glycolytic intermediate dihydroxyacetone phosphate (DHAP) to sn-glycerol 3-phosphate (G3P), the key precursor for phospholipid synthesis. This Pseudomonas fluorescens (strain SBW25) protein is Glycerol-3-phosphate dehydrogenase [NAD(P)+].